The chain runs to 149 residues: Large ribosomal subunit protein bL9 (149 aa).

This sequence belongs to the bacterial ribosomal protein bL9 family.

Its function is as follows. Binds to the 23S rRNA. This is Large ribosomal subunit protein bL9 from Legionella pneumophila (strain Paris).